Reading from the N-terminus, the 346-residue chain is Phosphate acyltransferase (346 aa).

Belongs to the PlsX family. In terms of assembly, homodimer. Probably interacts with PlsY.

It localises to the cytoplasm. The enzyme catalyses a fatty acyl-[ACP] + phosphate = an acyl phosphate + holo-[ACP]. It participates in lipid metabolism; phospholipid metabolism. In terms of biological role, catalyzes the reversible formation of acyl-phosphate (acyl-PO(4)) from acyl-[acyl-carrier-protein] (acyl-ACP). This enzyme utilizes acyl-ACP as fatty acyl donor, but not acyl-CoA. The protein is Phosphate acyltransferase of Brucella abortus (strain S19).